A 319-amino-acid polypeptide reads, in one-letter code: Major intracellular serine protease (319 aa).

A propeptide spanning residues 1-17 (MNGEIRLIPYVTNEQIM) is cleaved from the precursor. In terms of domain architecture, Peptidase S8 spans 23–307 (PEGIKVIKAP…FLYLTAPDEL (285 aa)). Active-site charge relay system residues include D50, H87, and S246.

This sequence belongs to the peptidase S8 family. Homodimer.

It is found in the cytoplasm. In terms of biological role, major intracellular protease produced by Bacillus subtilis. This Bacillus subtilis (strain 168) protein is Major intracellular serine protease (isp).